We begin with the raw amino-acid sequence, 356 residues long: Heat-inducible transcription repressor HrcA (356 aa).

This sequence belongs to the HrcA family.

In terms of biological role, negative regulator of class I heat shock genes (grpE-dnaK-dnaJ and groELS operons). Prevents heat-shock induction of these operons. The sequence is that of Heat-inducible transcription repressor HrcA from Bartonella quintana (strain Toulouse) (Rochalimaea quintana).